The following is a 445-amino-acid chain: MSRDAPIKADKDYSQILKEEFPKIDSLAQNDCNSALDQLLVLEKKTRQASDLASSKEVLAKIVDLLASRNKWDDLNEQLTLLSKKHGQLKLSIQYMIQKVMEYLKSSKSLDLNTRISVIETIRVVTENKIFVEVERARVTKDLVEIKKEEGKIDEAADILCELQVETYGSMEMSEKIQFILEQMELSILKGDYSQATVLSRKILKKTFKNPKYESLKLEYYNLLVKISLHKREYLEVAQYLQEIYQTDAIKSDEAKWKPVLSHIVYFLVLSPYGNLQNDLIHKIQNDNNLKKLESQESLVKLFTTNELMRWPIVQKTYEPVLNEDDLAFGGEANKHHWEDLQKRVIEHNLRVISEYYSRITLLRLNELLDLTESQTETYISDLVNQGIIYAKVNRPAKIVNFEKPKNSSQLLNEWSHNVDELLEHIETIGHLITKEEIMHGLQAK.

Serine 2 is subject to N-acetylserine. The region spanning 233–407 (EYLEVAQYLQ…KIVNFEKPKN (175 aa)) is the PCI domain.

It belongs to the proteasome subunit p55 family. N-acetylated by NAT1.

Its function is as follows. Acts as a regulatory subunit of the 26S proteasome which is involved in the ATP-dependent degradation of ubiquitinated proteins. The protein is 26S proteasome regulatory subunit RPN5 (RPN5) of Saccharomyces cerevisiae (strain ATCC 204508 / S288c) (Baker's yeast).